A 365-amino-acid polypeptide reads, in one-letter code: MISYPFFSLSPPGLVPPPMAVPPVEMYSGSFWNRMRKPLPLRTQVIRFTVVFVIVSFILAVALQITHERMPDPKVTKPLPDLGFELLTKVPGMYVLADCCIGFLNILSVFTAFKLYLLHRHCVGSGEPELPCNIPGVSRFFLSVWLCKENCRIELRNVHTIAWIRFITSYALLLLFRSVVIVMTSLPAPDDLCQDPPKIENPVKNVILTVLTAGGGSIHCGDLMYSGHTVILTLHLMFHWIYGAMVHWSFRPVVTVVAIFGYYCIVASRFHYTDDVLVAIYLTIATFIAVGHNADGAPWQLQLFIRWLPCCGANSREMTEDSQPVMVAFKSEELDEMNGVLEGRQKKHGGVGDGEALMFKCGAYV.

The Cytoplasmic segment spans residues 1–44 (MISYPFFSLSPPGLVPPPMAVPPVEMYSGSFWNRMRKPLPLRTQ). Residues 45–65 (VIRFTVVFVIVSFILAVALQI) traverse the membrane as a helical segment. The Lumenal segment spans residues 66–92 (THERMPDPKVTKPLPDLGFELLTKVPG). A helical transmembrane segment spans residues 93–113 (MYVLADCCIGFLNILSVFTAF). At 114–165 (KLYLLHRHCVGSGEPELPCNIPGVSRFFLSVWLCKENCRIELRNVHTIAWIR) the chain is on the cytoplasmic side. Residues 166 to 186 (FITSYALLLLFRSVVIVMTSL) form a helical membrane-spanning segment. The Lumenal portion of the chain corresponds to 187 to 229 (PAPDDLCQDPPKIENPVKNVILTVLTAGGGSIHCGDLMYSGHT). Residue His-228 is part of the active site. A helical membrane pass occupies residues 230–250 (VILTLHLMFHWIYGAMVHWSF). A topological domain (cytoplasmic) is located at residue Arg-251. A helical transmembrane segment spans residues 252–272 (PVVTVVAIFGYYCIVASRFHY). Residues His-271 and Asp-275 contribute to the active site. Residues 273–275 (TDD) lie on the Lumenal side of the membrane. The chain crosses the membrane as a helical span at residues 276–296 (VLVAIYLTIATFIAVGHNADG). Residues 297-365 (APWQLQLFIR…ALMFKCGAYV (69 aa)) lie on the Cytoplasmic side of the membrane.

Belongs to the sphingomyelin synthase family.

Its subcellular location is the golgi apparatus membrane. It catalyses the reaction an N-acylsphing-4-enine + a 1,2-diacyl-sn-glycero-3-phosphocholine = a sphingomyelin + a 1,2-diacyl-sn-glycerol. Functionally, bidirectional lipid cholinephosphotransferase capable of converting phosphatidylcholine (PC) and ceramide to sphingomyelin (SM) and diacylglycerol (DAG) and vice versa. Direction is dependent on the relative concentrations of DAG and ceramide as phosphocholine acceptors. Directly and specifically recognizes the choline head group on the substrate. Also requires two fatty chains on the choline-P donor molecule in order to be recognized efficiently as a substrate. Does not function strictly as a SM synthase. Essential for viability of the pathogenic bloodstream stage of this human protozoan parasite and, consequently, can be considered as potential drug target. The chain is Phosphatidylcholine:ceramide cholinephosphotransferase 4 from Trypanosoma brucei brucei (strain 927/4 GUTat10.1).